A 203-amino-acid chain; its full sequence is ADP-ribosylation factor-like protein 6-interacting protein 1 (203 aa).

Topologically, residues 1-41 are cytoplasmic; that stretch reads MAEGDNRSSNLLAVETASLEEQLQGWGEVMLMADKVLRWER. Residues 42 to 62 form a helical membrane-spanning segment; that stretch reads AWFPPAIMGVVSLLFLIIYYL. Over 63–65 the chain is Lumenal; the sequence is DPS. Residues 66 to 86 traverse the membrane as a helical segment; that stretch reads VLSGVSCFVMFLCLADYLVPI. Topologically, residues 87-133 are cytoplasmic; it reads LAPRIFGSNKWTTEQQQRFHEICSNLVKTRRRAVGWWKRLFSLKEEK. Residues 134–175 traverse the membrane as a helical segment; it reads PKMYFMTMIISLAAVAWVGQQVHNLLLTYLIVTFVLLLPGLN. The Lumenal segment spans residues 176–203; it reads QHGIILKYIGMAKREINKLLKQKEKKNE.

The protein belongs to the ARL6ip family. Homooligomer. Heterodimer with ARL6IP5. Interacts with ARL6. Interacts with TMEM33. Interacts with ATL1. Expressed in the cerebral cortex, cerebellum, hippocampus, olfactory bulbs, medulla oblongate and limbic system (at protein level). Ubiquitous. Expressed in all hematopoietic cell lineages, with highest levels in early myeloid progenitor cells.

The protein localises to the endomembrane system. It localises to the endoplasmic reticulum membrane. The protein resides in the endoplasmic reticulum. Positively regulates SLC1A1/EAAC1-mediated glutamate transport by increasing its affinity for glutamate in a PKC activity-dependent manner. Promotes the catalytic efficiency of SLC1A1/EAAC1 probably by reducing its interaction with ARL6IP5, a negative regulator of SLC1A1/EAAC1-mediated glutamate transport. Plays a role in the formation and stabilization of endoplasmic reticulum tubules. Negatively regulates apoptosis, possibly by modulating the activity of caspase-9 (CASP9). Inhibits cleavage of CASP9-dependent substrates and downstream markers of apoptosis but not CASP9 itself. May be involved in protein transport, membrane trafficking, or cell signaling during hematopoietic maturation. The protein is ADP-ribosylation factor-like protein 6-interacting protein 1 (Arl6ip1) of Mus musculus (Mouse).